Here is a 138-residue protein sequence, read N- to C-terminus: Regulator of ribonuclease activity B (138 aa).

Residues 111-138 (WGTYFEDPNGEEGDDDDYVDEDDDGVRH) form a disordered region. Acidic residues predominate over residues 118–138 (PNGEEGDDDDYVDEDDDGVRH).

The protein belongs to the RraB family. As to quaternary structure, interacts with the C-terminal region of Rne.

It localises to the cytoplasm. Its function is as follows. Globally modulates RNA abundance by binding to RNase E (Rne) and regulating its endonucleolytic activity. Can modulate Rne action in a substrate-dependent manner by altering the composition of the degradosome. The sequence is that of Regulator of ribonuclease activity B from Salmonella typhi.